The following is a 63-amino-acid chain: MPVPKRKTSPSRRGKRRSHDGLRPENVIVNKTTGEFQRSHHVSLDGFYNGRRVLSPKGKAGSS.

Over residues Met1–Ser18 the composition is skewed to basic residues. The tract at residues Met1–Asn26 is disordered.

It belongs to the bacterial ribosomal protein bL32 family.

This chain is Large ribosomal subunit protein bL32, found in Neorickettsia sennetsu (strain ATCC VR-367 / Miyayama) (Ehrlichia sennetsu).